The primary structure comprises 306 residues: D-alanine--D-alanine ligase (306 aa).

An ATP-grasp domain is found at 106 to 301 (KLLWQSAGIN…FEELVLKILG (196 aa)). Residue 132-187 (AKELGLPLIVKPSREGSTIGLSKVREAGEVAAAWHLAARHDAMVLAEQFIEGTELT) participates in ATP binding. The Mg(2+) site is built by Asp-255, Glu-268, and Asn-270.

Belongs to the D-alanine--D-alanine ligase family. Mg(2+) is required as a cofactor. It depends on Mn(2+) as a cofactor.

It localises to the cytoplasm. It catalyses the reaction 2 D-alanine + ATP = D-alanyl-D-alanine + ADP + phosphate + H(+). It functions in the pathway cell wall biogenesis; peptidoglycan biosynthesis. Its function is as follows. Cell wall formation. In Nitrosospira multiformis (strain ATCC 25196 / NCIMB 11849 / C 71), this protein is D-alanine--D-alanine ligase.